The following is a 378-amino-acid chain: Putative methyltransferase spot-1 (378 aa).

It belongs to the class IV-like SAM-binding methyltransferase superfamily.

It is found in the cytoplasm. The protein resides in the cytoskeleton. It localises to the spindle. The protein localises to the chromosome. Its subcellular location is the centromere. It is found in the kinetochore. The protein resides in the microtubule organizing center. It localises to the centrosome. In terms of biological role, required for association of the centrosomes with the poles of the bipolar mitotic spindle during metaphase. This is Putative methyltransferase spot-1 from Caenorhabditis elegans.